The sequence spans 37 residues: Esculentin-2L (37 aa).

Residues cysteine 31 and cysteine 37 are joined by a disulfide bond.

Expressed by the skin glands.

It is found in the secreted. Its function is as follows. Antibacterial activity against Gram-positive bacterium S.aureus and Gram-negative bacterium E.coli. Has activity against C.albicans. The sequence is that of Esculentin-2L from Rana luteiventris (Columbia spotted frog).